The following is a 736-amino-acid chain: Neprilysin-2 (736 aa).

Residues 1 to 19 (MRPDEEDGTTKSPGSRWTR) are Cytoplasmic-facing. Residues 20 to 40 (IWAIIALILLILFLLVLGAAI) form a helical; Signal-anchor for type II membrane protein membrane-spanning segment. Residues 41-736 (YFYINYKDSS…MNPREKCRVW (696 aa)) are Extracellular-facing. Positions 52–736 (VCLSPGCIKT…MNPREKCRVW (685 aa)) constitute a Peptidase M13 domain. 5 disulfides stabilise this stretch: C53/C58, C76/C721, C84/C681, C142/C399, and C608/C733. Residues 103–123 (FENLGQDLEFALKELLDENDE) adopt a coiled-coil conformation. H571 contributes to the Zn(2+) binding site. The active site involves E572. Zn(2+) contacts are provided by H575 and E633. D637 acts as the Proton donor in catalysis.

This sequence belongs to the peptidase M13 family. Zn(2+) is required as a cofactor. As to expression, expressed in muscle cells, GLR cells, SMB motor neurons and AIM interneurons.

Its subcellular location is the membrane. Its function is as follows. Required for olfactory plasticity, which is the change from positive chemotaxis to dispersal after prolonged exposure to an odorant. Thought to antagonise snet-1 by degrading excess snet-1 peptides and thus enabling olfactory plasticity. This chain is Neprilysin-2, found in Caenorhabditis elegans.